The primary structure comprises 266 residues: MDIFQVIVLALIQGLTEFLPISSSAHLILPAQLLGWQDQGLTFDVAVNTGSLLAVVIYFRRELFSMFTAWTSSLVTRQQTQESKLAWWIILATIPAVIFGFTAKDFISTHLRNIEVIATTTIVFGLLLWWADKLNREGFSEFQVGWKKALLIGFAQAMALIPGTSRSGATITAALALGLSREAAARFSFLMSVPVSLGAAILVVKDLLSSQEAIDYQALVLGTALSFVAAYLCIHYFLKIISRMGMTPFVIYRLALGAILCVVIFA.

A run of 8 helical transmembrane segments spans residues 1–21 (MDIF…FLPI), 39–59 (QGLT…VIYF), 87–107 (WWII…KDFI), 114–134 (IEVI…ADKL), 144–164 (VGWK…IPGT), 184–204 (AARF…ILVV), 218–238 (ALVL…HYFL), and 246–266 (MTPF…VIFA).

It belongs to the UppP family.

Its subcellular location is the cell inner membrane. The enzyme catalyses di-trans,octa-cis-undecaprenyl diphosphate + H2O = di-trans,octa-cis-undecaprenyl phosphate + phosphate + H(+). Functionally, catalyzes the dephosphorylation of undecaprenyl diphosphate (UPP). Confers resistance to bacitracin. The sequence is that of Undecaprenyl-diphosphatase from Shewanella loihica (strain ATCC BAA-1088 / PV-4).